Consider the following 945-residue polypeptide: Bifunctional glutamine synthetase adenylyltransferase/adenylyl-removing enzyme (945 aa).

The segment at 1–441 is adenylyl removase; sequence MLPLSAALQT…VFNDLIGDDS (441 aa). Residues 450-945 form an adenylyl transferase region; that stretch reads YQHYHSLWQD…VRASWAKWLG (496 aa).

Belongs to the GlnE family. Mg(2+) serves as cofactor.

The catalysed reaction is [glutamine synthetase]-O(4)-(5'-adenylyl)-L-tyrosine + phosphate = [glutamine synthetase]-L-tyrosine + ADP. It carries out the reaction [glutamine synthetase]-L-tyrosine + ATP = [glutamine synthetase]-O(4)-(5'-adenylyl)-L-tyrosine + diphosphate. In terms of biological role, involved in the regulation of glutamine synthetase GlnA, a key enzyme in the process to assimilate ammonia. When cellular nitrogen levels are high, the C-terminal adenylyl transferase (AT) inactivates GlnA by covalent transfer of an adenylyl group from ATP to specific tyrosine residue of GlnA, thus reducing its activity. Conversely, when nitrogen levels are low, the N-terminal adenylyl removase (AR) activates GlnA by removing the adenylyl group by phosphorolysis, increasing its activity. The regulatory region of GlnE binds the signal transduction protein PII (GlnB) which indicates the nitrogen status of the cell. In Serratia proteamaculans (strain 568), this protein is Bifunctional glutamine synthetase adenylyltransferase/adenylyl-removing enzyme.